The primary structure comprises 82 residues: Zinc finger CCCH domain-containing protein 13 (82 aa).

C3H1-type zinc fingers lie at residues 9 to 37 and 55 to 82; these read RPGE…HPKN and RPGQ…DHFT.

The polypeptide is Zinc finger CCCH domain-containing protein 13 (Arabidopsis thaliana (Mouse-ear cress)).